The following is a 915-amino-acid chain: Transferrin-binding protein A (915 aa).

Positions 1–24 (MQQQHLFRLNILCLSLMTALPAYA) are cleaved as a signal peptide. The short motif at 38 to 45 (DTIQVKAK) is the TonB box element. The region spanning 51–176 (RDNEVTGLGK…LAGSVAFQTK (126 aa)) is the TBDR plug domain. Positions 187–915 (QWGIQSKTAY…NYTFSLEMKF (729 aa)) constitute a TBDR beta-barrel domain. Positions 526-540 (LKTPPQNNGKKTSPN) are enriched in polar residues. Residues 526 to 545 (LKTPPQNNGKKTSPNGREKN) are disordered. Positions 898–915 (NRYAAPGRNYTFSLEMKF) match the TonB C-terminal box motif.

Belongs to the TonB-dependent receptor family. In terms of assembly, binds both human apo- and holo-transferrin (TF), via the TF C-terminus. Forms a large complex with TF and TbpB.

The protein resides in the cell outer membrane. Neisseria acquires iron by extracting it from serum transferrin (TF) in its human host. Acts as a TF receptor and is required for TF utilization. Binds both apo- and holo-TF, via the TF C-terminus. This Neisseria gonorrhoeae protein is Transferrin-binding protein A.